The primary structure comprises 779 residues: Phosphoribosylformylglycinamidine synthase subunit PurL (779 aa).

Residue H52 is part of the active site. ATP is bound by residues Y55 and K94. Residue E96 participates in Mg(2+) binding. Substrate is bound by residues S97–H100 and R119. H98 serves as the catalytic Proton acceptor. D120 contacts Mg(2+). Substrate is bound at residue Q243. Residue D271 participates in Mg(2+) binding. E315–Q317 lines the substrate pocket. 2 residues coordinate ATP: N523 and G560. N561 lines the Mg(2+) pocket. S563 serves as a coordination point for substrate.

Belongs to the FGAMS family. As to quaternary structure, monomer. Part of the FGAM synthase complex composed of 1 PurL, 1 PurQ and 2 PurS subunits.

The protein localises to the cytoplasm. It carries out the reaction N(2)-formyl-N(1)-(5-phospho-beta-D-ribosyl)glycinamide + L-glutamine + ATP + H2O = 2-formamido-N(1)-(5-O-phospho-beta-D-ribosyl)acetamidine + L-glutamate + ADP + phosphate + H(+). The protein operates within purine metabolism; IMP biosynthesis via de novo pathway; 5-amino-1-(5-phospho-D-ribosyl)imidazole from N(2)-formyl-N(1)-(5-phospho-D-ribosyl)glycinamide: step 1/2. Functionally, part of the phosphoribosylformylglycinamidine synthase complex involved in the purines biosynthetic pathway. Catalyzes the ATP-dependent conversion of formylglycinamide ribonucleotide (FGAR) and glutamine to yield formylglycinamidine ribonucleotide (FGAM) and glutamate. The FGAM synthase complex is composed of three subunits. PurQ produces an ammonia molecule by converting glutamine to glutamate. PurL transfers the ammonia molecule to FGAR to form FGAM in an ATP-dependent manner. PurS interacts with PurQ and PurL and is thought to assist in the transfer of the ammonia molecule from PurQ to PurL. The polypeptide is Phosphoribosylformylglycinamidine synthase subunit PurL (Prochlorococcus marinus subsp. pastoris (strain CCMP1986 / NIES-2087 / MED4)).